The sequence spans 150 residues: Kirola (150 aa).

At Met-1 the chain carries N-acetylmethionine.

It belongs to the MLP family. In terms of assembly, monomer. Post-translationally, the N-terminus is blocked.

The polypeptide is Kirola (Actinidia deliciosa (Kiwi)).